The primary structure comprises 330 residues: AA9 family lytic polysaccharide monooxygenase E (330 aa).

An N-terminal signal peptide occupies residues 1-20; that stretch reads MRSTLVTGLIAGLLSQQAAA. Residues H21 and H99 each coordinate Cu(2+). A disulfide bridge connects residues C58 and C193. 2 residues coordinate O2: H179 and Q188. Residue Y190 participates in Cu(2+) binding. In terms of domain architecture, CBM1 spans 293 to 330; it reads CSVAKYQQCGGTGYTGCTSCASGSTCSAVSPPYYSQCV.

The protein belongs to the polysaccharide monooxygenase AA9 family. It depends on Cu(2+) as a cofactor.

The protein resides in the secreted. It carries out the reaction [(1-&gt;4)-beta-D-glucosyl]n+m + reduced acceptor + O2 = 4-dehydro-beta-D-glucosyl-[(1-&gt;4)-beta-D-glucosyl]n-1 + [(1-&gt;4)-beta-D-glucosyl]m + acceptor + H2O.. Functionally, lytic polysaccharide monooxygenase (LPMO) that depolymerizes crystalline and amorphous polysaccharides via the oxidation of scissile alpha- or beta-(1-4)-glycosidic bonds, yielding exclusively C1 oxidation products. Catalysis by LPMOs requires the reduction of the active-site copper from Cu(II) to Cu(I) by a reducing agent and H(2)O(2) or O(2) as a cosubstrate. The protein is AA9 family lytic polysaccharide monooxygenase E (gh61-5) of Neurospora crassa (strain ATCC 24698 / 74-OR23-1A / CBS 708.71 / DSM 1257 / FGSC 987).